The following is a 782-amino-acid chain: General transcription and DNA repair factor IIH helicase/translocase subunit XPB (782 aa).

Basic and acidic residues predominate over residues 1–11 (MGRKDKSDREK). Disordered regions lie at residues 1–47 (MGRK…VDES) and 211–242 (TISSKSAISKSQQDNGGPSSSQPADGQRSGTQ). A Nuclear localization signal motif is present at residues 6–17 (KSDREKKSKKRY). The segment covering 19–28 (EDEEEDEEVI) has biased composition (acidic residues). A compositionally biased stretch (low complexity) spans 211-223 (TISSKSAISKSQQ). The span at 224–242 (DNGGPSSSQPADGQRSGTQ) shows a compositional bias: polar residues. Residues 326-487 (MFGNGRARSG…DLNFLIGPKL (162 aa)) form the Helicase ATP-binding domain. 339 to 346 (LPCGAGKS) serves as a coordination point for ATP. Residues 440-443 (DEVH) carry the DEVH box motif. Positions 541–701 (RACQFLIRFH…LAGMEEEDLM (161 aa)) constitute a Helicase C-terminal domain.

Belongs to the helicase family. RAD25/XPB subfamily. In terms of assembly, component of the 7-subunit TFIIH core complex composed of XPB/ERCC3, XPD/ERCC2, GTF2H1, GTF2H2, GTF2H3, GTF2H4 and GTF2H5, which is active in NER. The core complex associates with the 3-subunit CDK-activating kinase (CAK) module composed of CCNH/cyclin H, CDK7 and MNAT1 to form the 10-subunit holoenzyme (holo-TFIIH) active in transcription. Interacts with PUF60. Interacts with ATF7IP. Interacts with Epstein-Barr virus EBNA2.

The protein resides in the nucleus. It carries out the reaction Couples ATP hydrolysis with the unwinding of duplex DNA by translocating in the 3'-5' direction.. The enzyme catalyses ATP + H2O = ADP + phosphate + H(+). In terms of biological role, ATP-dependent 3'-5' DNA helicase/translocase; binds dsDNA rather than ssDNA, unzipping it in a translocase rather than classical helicase activity. Component of the general transcription and DNA repair factor IIH (TFIIH) core complex. When complexed to CDK-activating kinase (CAK), involved in RNA transcription by RNA polymerase II. The ATPase activity of XPB/ERCC3, but not its helicase activity, is required for DNA opening; it may wrap around the damaged DNA wedging it open, causing localized melting and twisting that allows XPD/ERCC2 helicase to anchor. The ATP-dependent helicase activity of XPB/ERCC3 may be required for promoter escape. Also involved in transcription-coupled nucleotide excision repair (NER) of damaged DNA. In NER, TFIIH acts by opening DNA around the lesion to allow the excision of the damaged oligonucleotide and its replacement by a new DNA fragment. In Danio rerio (Zebrafish), this protein is General transcription and DNA repair factor IIH helicase/translocase subunit XPB (ercc3).